We begin with the raw amino-acid sequence, 220 residues long: Ribose-5-phosphate isomerase A (220 aa).

Residues 25-28 (TGST), 80-83 (DGAD), and 93-96 (KGGG) each bind substrate. The active-site Proton acceptor is the glutamate 102. Lysine 120 serves as a coordination point for substrate.

It belongs to the ribose 5-phosphate isomerase family. In terms of assembly, homodimer.

The catalysed reaction is aldehydo-D-ribose 5-phosphate = D-ribulose 5-phosphate. It functions in the pathway carbohydrate degradation; pentose phosphate pathway; D-ribose 5-phosphate from D-ribulose 5-phosphate (non-oxidative stage): step 1/1. Its function is as follows. Catalyzes the reversible conversion of ribose-5-phosphate to ribulose 5-phosphate. The chain is Ribose-5-phosphate isomerase A from Bacillus cereus (strain ZK / E33L).